We begin with the raw amino-acid sequence, 160 residues long: Baculoviral IAP repeat-containing protein 5.1-A (160 aa).

One copy of the BIR repeat lies at 27-97 (RLATFADWPF…KRSANCGFLS (71 aa)). Thr43 is modified (phosphothreonine; by CDK1). Zn(2+) contacts are provided by Cys66, Cys69, His86, and Cys93.

It belongs to the IAP family. In terms of assembly, component of the CPC at least composed of survivin/birc5, incenp, cdca8/borealin and/or cdca9/dasra-A, and aurkb/aurora-B. Interacts directly with incenp (via N-terminus), and may weakly interact with aurkb (via N-terminus) to stabilize the complex. Interacts with GTP-bound ran in both the S and M phases of the cell cycle. Also found in a complex with ubiquitin-mediated signaling proteins including at least usp9x/xFAM, nploc4/npl4 and ufd1. Post-translationally, ubiquitination is required for centrosome-targeting.

The protein resides in the cytoplasm. Its subcellular location is the nucleus. It is found in the chromosome. The protein localises to the centromere. It localises to the cytoskeleton. The protein resides in the spindle. Component of the chromosomal passenger complex (CPC), a complex that acts as a key regulator of mitosis. The CPC complex has essential functions at the centromere in ensuring correct chromosome alignment and segregation and is required for chromatin-induced microtubule stabilization and spindle assembly. Stimulates the mitotic kinase activity of aurkb/aurora-B in the CPC. Does not appear to exhibit anti-apoptotic activity. The sequence is that of Baculoviral IAP repeat-containing protein 5.1-A (birc5.1-a) from Xenopus laevis (African clawed frog).